A 465-amino-acid polypeptide reads, in one-letter code: Transcriptional protein swt1 (465 aa).

One can recognise a PINc domain in the interval 70-190 (GLFVLDTNFL…LLSDDKNLSI (121 aa)).

This sequence belongs to the SWT1 family.

It is found in the cytoplasm. It localises to the nucleus. Its function is as follows. Involved in transcription. The polypeptide is Transcriptional protein swt1 (Schizosaccharomyces pombe (strain 972 / ATCC 24843) (Fission yeast)).